We begin with the raw amino-acid sequence, 341 residues long: UDP-3-O-acylglucosamine N-acyltransferase (341 aa).

The Proton acceptor role is filled by His239.

This sequence belongs to the transferase hexapeptide repeat family. LpxD subfamily. Homotrimer.

It catalyses the reaction a UDP-3-O-[(3R)-3-hydroxyacyl]-alpha-D-glucosamine + a (3R)-hydroxyacyl-[ACP] = a UDP-2-N,3-O-bis[(3R)-3-hydroxyacyl]-alpha-D-glucosamine + holo-[ACP] + H(+). It functions in the pathway bacterial outer membrane biogenesis; LPS lipid A biosynthesis. Its function is as follows. Catalyzes the N-acylation of UDP-3-O-acylglucosamine using 3-hydroxyacyl-ACP as the acyl donor. Is involved in the biosynthesis of lipid A, a phosphorylated glycolipid that anchors the lipopolysaccharide to the outer membrane of the cell. This is UDP-3-O-acylglucosamine N-acyltransferase from Shewanella sp. (strain MR-4).